The sequence spans 277 residues: MAITAQDINKLRQLTGAGMMDCKKALTEAQGDIDKAIELLRKKGQKIAAARAGRDTTEGFALADVNASADHGAIIALGCETDFVAKNDLFQQIAQQILSLALAQQPATIEDLKQLEIDGLTVQERITELVGKMGENITLSAYETLSAEVVVPYIHTGNKLAVLVALQGAKGEDVVVAGKDVAMQIAALNPIAIDKDGVFTSVIEQELAIAREQAIREGKPEAMLENIAQGRLNKFFKENTLANQPFVKDNTLTVAQYLTKIAAGLVVKNFKRVLVGA.

The tract at residues 81-84 (TDFV) is involved in Mg(2+) ion dislocation from EF-Tu.

It belongs to the EF-Ts family.

The protein localises to the cytoplasm. In terms of biological role, associates with the EF-Tu.GDP complex and induces the exchange of GDP to GTP. It remains bound to the aminoacyl-tRNA.EF-Tu.GTP complex up to the GTP hydrolysis stage on the ribosome. This Amoebophilus asiaticus (strain 5a2) protein is Elongation factor Ts.